Here is a 245-residue protein sequence, read N- to C-terminus: Adenosylcobinamide-GDP ribazoletransferase (245 aa).

5 consecutive transmembrane segments (helical) span residues 31 to 51, 57 to 77, 109 to 129, 134 to 154, and 176 to 196; these read LLHYPAVGLFLGALLWLAALL, PLLQAALLLALWVALTGALHL, VAVVVLVIMLLLKFSALLVVL, PAALVLAPLLGRAALLALFLC, and ALMVLALVVIGCLLLGATGLL.

Belongs to the CobS family. Requires Mg(2+) as cofactor.

The protein localises to the cell inner membrane. It carries out the reaction alpha-ribazole + adenosylcob(III)inamide-GDP = adenosylcob(III)alamin + GMP + H(+). The catalysed reaction is alpha-ribazole 5'-phosphate + adenosylcob(III)inamide-GDP = adenosylcob(III)alamin 5'-phosphate + GMP + H(+). It participates in cofactor biosynthesis; adenosylcobalamin biosynthesis; adenosylcobalamin from cob(II)yrinate a,c-diamide: step 7/7. In terms of biological role, joins adenosylcobinamide-GDP and alpha-ribazole to generate adenosylcobalamin (Ado-cobalamin). Also synthesizes adenosylcobalamin 5'-phosphate from adenosylcobinamide-GDP and alpha-ribazole 5'-phosphate. The chain is Adenosylcobinamide-GDP ribazoletransferase from Stutzerimonas stutzeri (strain A1501) (Pseudomonas stutzeri).